A 622-amino-acid polypeptide reads, in one-letter code: MSTDNKQSLPAITLAAIGVVYGDIGTSPLYTLRECLSGQFGFGVERDAVFGFLSLIFWLLIFVVSIKYLTFVMRADNAGEGGILTLMSLAGRNTSARTTSMLVIMGLIGGSFFYGEVVITPAISVMSAIEGLEIVAPQLDTWIVPLSIIVLTLLFMIQKHGTAMVGKLFAPIMLTWFLILAGLGLRSIIANPEVLHALNPMWAVHFFLEYKTVSFIALGAVVLSITGVEALYADMGHFGKFPIRLAWFTVVLPSLTLNYFGQGALLLKNPEAIKNPFFLLAPDWALIPLLIIAALATVIASQAVISGVFSLTRQAVRLGYLSPMRIIHTSEMESGQIYIPFVNWMLYVAVVIVIVSFEHSSNLAAAYGIAVTGTMVLTSILSTTVARQNWHWNKYFVALILIAFLCVDIPLFTANLDKLLSGGWLPLSLGTVMFIVMTTWKSERFRLLRRMHEHGNSLEAMIASLEKSPPVRVPGTAVYMSRAINVIPFALMHNLKHNKVLHERVILLTLRTEDAPYVHNVRRVQIEQLSLTFWRVVASYGWRETPNVEEVFHRCGLEGLSCRMMETSFFMSHESLILGKRPWYLRLRGKLYLLLQRNALRAPDQFEIPPNRVIELGTQVEI.

12 helical membrane-spanning segments follow: residues 9–29 (LPAITLAAIGVVYGDIGTSPL), 49–69 (VFGFLSLIFWLLIFVVSIKYL), 103–123 (VIMGLIGGSFFYGEVVITPAI), 137–157 (PQLDTWIVPLSIIVLTLLFMI), 165–185 (VGKLFAPIMLTWFLILAGLGL), 213–233 (VSFIALGAVVLSITGVEALYA), 247–267 (WFTVVLPSLTLNYFGQGALLL), 276–296 (PFFLLAPDWALIPLLIIAALA), 337–357 (IYIPFVNWMLYVAVVIVIVSF), 363–383 (LAAAYGIAVTGTMVLTSILST), 396–416 (FVALILIAFLCVDIPLFTANL), and 419–439 (LLSGGWLPLSLGTVMFIVMTT).

It belongs to the HAK/KUP transporter (TC 2.A.72) family.

Its subcellular location is the cell inner membrane. It carries out the reaction K(+)(in) + H(+)(in) = K(+)(out) + H(+)(out). Its function is as follows. Responsible for the low-affinity transport of potassium into the cell. Likely operates as a K(+):H(+) symporter. This Shigella boydii serotype 18 (strain CDC 3083-94 / BS512) protein is Low affinity potassium transport system protein Kup.